A 310-amino-acid chain; its full sequence is Olfactory receptor 4D1 (310 aa).

Over 1–25 the chain is Extracellular; the sequence is MEPQNTTQVSMFVLLGFSQTQELQK. A glycan (N-linked (GlcNAc...) asparagine) is linked at Asn5. The helical transmembrane segment at 26–49 threads the bilayer; the sequence is FLFLLFLLVYVTTIVGNLLIMVTV. Residues 50-57 are Cytoplasmic-facing; that stretch reads TFDCRLHT. A helical membrane pass occupies residues 58 to 79; that stretch reads PMYFLLRNLALIDLCYSTVTSP. Over 80-100 the chain is Extracellular; sequence KMLVDFLHETKTISYQGCMAQ. The cysteines at positions 97 and 189 are disulfide-linked. The chain crosses the membrane as a helical span at residues 101-120; sequence IFFFHLLGGGTVFFLSVMAY. The Cytoplasmic segment spans residues 121–139; the sequence is DRYIAISQPLRYVTIMNTQ. The helical transmembrane segment at 140–158 threads the bilayer; it reads LCVGLVVAAWVGGFVHSIV. Topologically, residues 159–195 are extracellular; the sequence is QLALILPLPFCGPNILDNFYCDVPQVLRLACTDTSLL. A helical membrane pass occupies residues 196 to 219; the sequence is EFLMISNSGLLVIIWFLLLLISYT. Topologically, residues 220–235 are cytoplasmic; it reads VILVMLRSHSGKARRK. Residues 236-258 form a helical membrane-spanning segment; it reads AASTCTTHIIVVSMIFIPCIYIY. Over 259–269 the chain is Extracellular; sequence TWPFTPFLMDK. A helical transmembrane segment spans residues 270–289; that stretch reads AVSISYTVMTPMLNPMIYTL. Residues 290-310 are Cytoplasmic-facing; the sequence is RNQDMKAAMRRLGKCLVICRE.

The protein belongs to the G-protein coupled receptor 1 family.

The protein localises to the cell membrane. Functionally, odorant receptor. This chain is Olfactory receptor 4D1 (OR4D1), found in Homo sapiens (Human).